The sequence spans 357 residues: NADH-quinone oxidoreductase subunit H (357 aa).

A run of 8 helical transmembrane segments spans residues 18–38, 92–112, 127–147, 165–185, 206–226, 268–288, 294–314, and 329–349; these read VAWMVVWSLVKIVVIAVPIIL, VLFVVAPVVTLMPALAAWAVV, LLYIMAITSIGVYGVIVAGWA, VSYELAIGFVLVSVLLVSGSL, FLSWNWLPLLPLFIIYVISAV, ILLSCMAAIMFLGGWMSPIDI, IPGWIWLGIKTFCVVSMFVWF, and LGWKIFIPLTGVWLVVLAIWM.

This sequence belongs to the complex I subunit 1 family. NDH-1 is composed of 14 different subunits. Subunits NuoA, H, J, K, L, M, N constitute the membrane sector of the complex.

The protein resides in the cell inner membrane. It catalyses the reaction a quinone + NADH + 5 H(+)(in) = a quinol + NAD(+) + 4 H(+)(out). NDH-1 shuttles electrons from NADH, via FMN and iron-sulfur (Fe-S) centers, to quinones in the respiratory chain. The immediate electron acceptor for the enzyme in this species is believed to be ubiquinone. Couples the redox reaction to proton translocation (for every two electrons transferred, four hydrogen ions are translocated across the cytoplasmic membrane), and thus conserves the redox energy in a proton gradient. This subunit may bind ubiquinone. In Bordetella bronchiseptica (strain ATCC BAA-588 / NCTC 13252 / RB50) (Alcaligenes bronchisepticus), this protein is NADH-quinone oxidoreductase subunit H.